A 519-amino-acid polypeptide reads, in one-letter code: Ribonuclease Y (519 aa).

The chain crosses the membrane as a helical span at residues 6 to 26 (VPFYLLIFLVGIGLGVLTFWA). The region spanning 209–272 (TVCTVTIPNE…HIAKMALTEL (64 aa)) is the KH domain. Residues 335 to 428 (VLDHSLEVSH…CSAADAISAS (94 aa)) enclose the HD domain.

The protein belongs to the RNase Y family.

The protein localises to the cell membrane. Endoribonuclease that initiates mRNA decay. The polypeptide is Ribonuclease Y (Protochlamydia amoebophila (strain UWE25)).